We begin with the raw amino-acid sequence, 359 residues long: MLTAERIKFTQKRGFRRVLNQRVDAYFAEHGLTQRDNPSMYLKTLIIVLWLFSAWAFVLFAPVIFPVRLLGCMVLAIALAAFSFNVGHDANHNAYSSNPHINRVLGMTYDFVGLSSFLWRYRHNYLHHTYTNILGHDVEIHGDGAVRMSPEQEHVGIYRFQQFYIWGLYLFIPFYWFLYDVYLVLNKGKYHDHKIPPFQPLELASLLGIKLLWLGYVFGLPLALGFSIPEVLIGASVTYMTYGIVVCTIFMLAHVLESTEFLTPDGESGAIDDEWAICQIRTTANFATNNPFWNWFCGGLNHQVTHHLFPNICHIHYPQLENIIKDVCQEFGVEYKVYPTFKAAIASNYRWLEAMGKAS.

A run of 2 helical transmembrane segments spans residues 45-65 (LIIV…PVIF) and 69-89 (LLGC…VGHD). Residues 88–92 (HDANH) carry the Histidine box-1 motif. Positions 123-128 (HNYLHH) match the Histidine box-2 motif. 3 helical membrane-spanning segments follow: residues 165-185 (IWGL…YLVL), 206-226 (LLGI…ALGF), and 231-251 (VLIG…TIFM). A Histidine box-3 motif is present at residues 306-310 (HHLFP).

Belongs to the fatty acid desaturase type 2 family. It depends on Fe(2+) as a cofactor.

It is found in the membrane. It catalyses the reaction a 1-[(9Z,12Z)-octadecdienoyl]-2-acyl-glycerolipid + 2 reduced [2Fe-2S]-[ferredoxin] + O2 + 2 H(+) = a 1-[(6Z,9Z,12Z)-octadectrienoyl]-2-acyl-glycerolipid + 2 oxidized [2Fe-2S]-[ferredoxin] + 2 H2O. The protein operates within lipid metabolism; polyunsaturated fatty acid biosynthesis. Desaturase involved in fatty acid biosynthesis. Introduces a double bond at carbon 6 of linoleoyl group (18:2) attached to the sn-1 position of the glycerol moiety of membrane glycerolipids, leading to the formation of gamma-linolenic acid (GLA). The sequence is that of sn-1 linoleoyl-lipid 6-desaturase from Synechocystis sp. (strain ATCC 27184 / PCC 6803 / Kazusa).